The following is a 139-amino-acid chain: Small ribosomal subunit protein uS12m (139 aa).

The transit peptide at 1-29 directs the protein to the mitochondrion; it reads MSWSGPLRGLNTSLTCGPALVPRLWATCS. Positions 36 to 56 are disordered; sequence MHRLGGPPKRPPQKLGPTEGR.

The protein belongs to the universal ribosomal protein uS12 family. As to quaternary structure, component of the mitochondrial ribosome small subunit (28S) which comprises a 12S rRNA and about 30 distinct proteins.

Its subcellular location is the mitochondrion. This chain is Small ribosomal subunit protein uS12m (MRPS12), found in Pongo abelii (Sumatran orangutan).